Here is a 465-residue protein sequence, read N- to C-terminus: Probable citrate synthase, mitochondrial (465 aa).

Residues His303, His349, and Asp404 contribute to the active site.

The protein belongs to the citrate synthase family. Homodimer.

Its subcellular location is the mitochondrion matrix. It carries out the reaction oxaloacetate + acetyl-CoA + H2O = citrate + CoA + H(+). The protein operates within carbohydrate metabolism; tricarboxylic acid cycle; isocitrate from oxaloacetate: step 1/2. The polypeptide is Probable citrate synthase, mitochondrial (Glossina morsitans morsitans (Savannah tsetse fly)).